A 206-amino-acid polypeptide reads, in one-letter code: Protein Nef (206 aa).

Glycine 2 is lipidated: N-myristoyl glycine; by host. The residue at position 6 (serine 6) is a Phosphoserine; by host. An acidic; interacts with host PACS1 and PACS2; stabilizes the interaction of NEF/MHC-I with host AP1M1; necessary for MHC-I internalization region spans residues 62–65 (EEEK). Positions 69 to 78 (PVTPQVPLRP) are SH3-binding; interaction with Src family tyrosine kinases. A PxxP; stabilizes the interaction of NEF/MHC-I with host AP1M1; necessary for MHC-I internalization motif is present at residues 72 to 75 (PQVP). Positions 108-124 (DILDLWIYHTQGYFPDW) are mediates dimerization, Nef-PTE1 interaction. The segment at 148 to 180 (VEPEKLEEANKGENTSLLHPVSLHGMDDPEREV) is binding to ATP6V1H. Positions 164-165 (LL) match the Dileucine internalization motif; necessary for CD4 internalization motif. The short motif at 174 to 175 (DD) is the Diacidic; necessary for CD4 internalization element.

This sequence belongs to the lentivirus primate group Nef protein family. As to quaternary structure, monomer; cytosolic form. Homodimer; membrane bound form. Interacts with Nef associated p21-activated kinase (PAK2); this interaction activates PAK2. Associates with the Nef-MHC-I-AP1 complex; this complex is required for MHC-I internalization. Interacts (via C-terminus) with host PI3-kinase. Interacts with host PACS1; this interaction seems to be weak. Interacts with host PACS2. Interacts with host LCK and MAPK3; these interactions inhibit the kinase activity of the latter. Interacts with host ATP6V1H; this interaction may play a role in CD4 endocytosis. Associates with the CD4-Nef-AP2 complex; this complex is required for CD4 internalization. Interacts with host AP2 subunit alpha and AP2 subunit sigma2. Interacts with TCR-zeta chain; this interaction up-regulates the Fas ligand (FasL) surface expression. Interacts with host HCK, LYN, and SRC; these interactions activate the Src family kinases. Interacts with MAP3K5; this interaction inhibits the Fas and TNFR-mediated death signals. Interacts with beta-COP and PTE1. Interacts with human RACK1; this increases Nef phosphorylation by PKC. Interacts with TP53; this interaction decreases the half-life of TP53, protecting the infected cell against p53-mediated apoptosis. In terms of processing, the virion-associated Nef proteins are cleaved by the viral protease to release the soluble C-terminal core protein. Nef is probably cleaved concomitantly with viral structural proteins on maturation of virus particles. Myristoylated. Post-translationally, phosphorylated on serine residues, probably by host PKCdelta and theta.

The protein localises to the host cell membrane. Its subcellular location is the virion. It localises to the secreted. It is found in the host Golgi apparatus membrane. Its function is as follows. Factor of infectivity and pathogenicity, required for optimal virus replication. Alters numerous pathways of T-lymphocyte function and down-regulates immunity surface molecules in order to evade host defense and increase viral infectivity. Alters the functionality of other immunity cells, like dendritic cells, monocytes/macrophages and NK cells. In terms of biological role, in infected CD4(+) T-lymphocytes, down-regulates the surface MHC-I, mature MHC-II, CD4, CD28, CCR5 and CXCR4 molecules. Mediates internalization and degradation of host CD4 through the interaction of with the cytoplasmic tail of CD4, the recruitment of AP-2 (clathrin adapter protein complex 2), internalization through clathrin coated pits, and subsequent transport to endosomes and lysosomes for degradation. Diverts host MHC-I molecules to the trans-Golgi network-associated endosomal compartments by an endocytic pathway to finally target them for degradation. MHC-I down-regulation may involve AP-1 (clathrin adapter protein complex 1) or possibly Src family kinase-ZAP70/Syk-PI3K cascade recruited by PACS2. In consequence infected cells are masked for immune recognition by cytotoxic T-lymphocytes. Decreasing the number of immune receptors also prevents reinfection by more HIV particles (superinfection). Down-regulates host SERINC3 and SERINC5 thereby excluding these proteins from the viral particles. Virion infectivity is drastically higher when SERINC3 or SERINC5 are excluded from the viral envelope, because these host antiviral proteins impair the membrane fusion event necessary for subsequent virion penetration. Bypasses host T-cell signaling by inducing a transcriptional program nearly identical to that of anti-CD3 cell activation. Interaction with TCR-zeta chain up-regulates the Fas ligand (FasL). Increasing surface FasL molecules and decreasing surface MHC-I molecules on infected CD4(+) cells send attacking cytotoxic CD8+ T-lymphocytes into apoptosis. Functionally, plays a role in optimizing the host cell environment for viral replication without causing cell death by apoptosis. Protects the infected cells from apoptosis in order to keep them alive until the next virus generation is ready to strike. Inhibits the Fas and TNFR-mediated death signals by blocking MAP3K5/ASK1. Decreases the half-life of TP53, protecting the infected cell against p53-mediated apoptosis. Inhibits the apoptotic signals regulated by the Bcl-2 family proteins through the formation of a Nef/PI3-kinase/PAK2 complex that leads to activation of PAK2 and induces phosphorylation of host BAD. Its function is as follows. Extracellular Nef protein targets CD4(+) T-lymphocytes for apoptosis by interacting with CXCR4 surface receptors. This is Protein Nef from Homo sapiens (Human).